Consider the following 144-residue polypeptide: Grifin (144 aa).

In terms of domain architecture, Galectin spans 5 to 133 (SKAFCAGGLA…DHCLAQVELA (129 aa)). Ser-138 carries the phosphoserine modification.

As to quaternary structure, homodimer. As to expression, not detected in lens.

The sequence is that of Grifin (GRIFIN) from Homo sapiens (Human).